Here is a 393-residue protein sequence, read N- to C-terminus: NAD(P)H-quinone oxidoreductase subunit H, chloroplastic (393 aa).

This sequence belongs to the complex I 49 kDa subunit family. NDH is composed of at least 16 different subunits, 5 of which are encoded in the nucleus.

It localises to the plastid. The protein localises to the chloroplast thylakoid membrane. The catalysed reaction is a plastoquinone + NADH + (n+1) H(+)(in) = a plastoquinol + NAD(+) + n H(+)(out). It carries out the reaction a plastoquinone + NADPH + (n+1) H(+)(in) = a plastoquinol + NADP(+) + n H(+)(out). NDH shuttles electrons from NAD(P)H:plastoquinone, via FMN and iron-sulfur (Fe-S) centers, to quinones in the photosynthetic chain and possibly in a chloroplast respiratory chain. The immediate electron acceptor for the enzyme in this species is believed to be plastoquinone. Couples the redox reaction to proton translocation, and thus conserves the redox energy in a proton gradient. The sequence is that of NAD(P)H-quinone oxidoreductase subunit H, chloroplastic from Ipomoea purpurea (Common morning glory).